Reading from the N-terminus, the 288-residue chain is Protein RepA (288 aa).

Belongs to the initiator RepB protein family.

Functionally, this protein is essential for plasmid replication; it is involved in copy control functions. In Escherichia coli, this protein is Protein RepA (repA).